A 144-amino-acid chain; its full sequence is Eukaryotic translation initiation factor 1A, X-chromosomal (144 aa).

Positions 1-15 (MPKNKGKGGKNRRRG) are enriched in basic residues. 2 disordered regions span residues 1 to 26 (MPKN…KREL) and 114 to 144 (KINE…IDDI). The segment covering 16–26 (KNENESEKREL) has biased composition (basic and acidic residues). The 75-residue stretch at 22-96 (EKRELVFKED…NKADVILKYN (75 aa)) folds into the S1-like domain. Positions 124–144 (GDDDEIQFDDIGDDDEDIDDI) are enriched in acidic residues.

This sequence belongs to the eIF-1A family. As to quaternary structure, component of the 43S pre-initiation complex (43S PIC), which is composed of the 40S ribosomal subunit, EIF1, eIF1A (EIF1AX), eIF3 complex, EIF5 and eIF2-GTP-initiator tRNA complex (eIF2 ternary complex). Interacts with EIF5; this interaction contributes to the maintenance of EIF1 within the open 43S PIC. Interacts through its C-terminal domain (CTD) with the CTD of EIF5B; from the location of the start codon by the 43S complex until the formation of the 80S complex. In terms of assembly, (Microbial infection) Interacts with human respiratory syncytial virus (HRSV) nucleoprotein; this interaction recruits EIF1AX to the viral replication complex to facilitate viral genomic RNA synthesis and virus production.

The protein resides in the cytoplasm. In terms of biological role, component of the 43S pre-initiation complex (43S PIC), which binds to the mRNA cap-proximal region, scans mRNA 5'-untranslated region, and locates the initiation codon. This protein enhances formation of the cap-proximal complex. Together with EIF1, facilitates scanning, start codon recognition, promotion of the assembly of 48S complex at the initiation codon (43S PIC becomes 48S PIC after the start codon is reached), and dissociation of aberrant complexes. After start codon location, together with EIF5B orients the initiator methionine-tRNA in a conformation that allows 60S ribosomal subunit joining to form the 80S initiation complex. Is released after 80S initiation complex formation, just after GTP hydrolysis by EIF5B, and before release of EIF5B. Its globular part is located in the A site of the 40S ribosomal subunit. Its interaction with EIF5 during scanning contribute to the maintenance of EIF1 within the open 43S PIC. In contrast to yeast orthologs, does not bind EIF1. The chain is Eukaryotic translation initiation factor 1A, X-chromosomal (EIF1AX) from Homo sapiens (Human).